The sequence spans 479 residues: UDP-glucose flavonoid 3-O-glucosyltransferase 6 (479 aa).

Histidine 17 functions as the Proton acceptor in the catalytic mechanism. Histidine 17 serves as a coordination point for an anthocyanidin. Aspartate 121 functions as the Charge relay in the catalytic mechanism. UDP-alpha-D-glucose contacts are provided by threonine 143, alanine 354, glutamine 356, histidine 371, tryptophan 374, asparagine 375, serine 376, and glutamate 379. Alanine 394 is an an anthocyanidin binding site. UDP-alpha-D-glucose is bound by residues glutamate 395 and glutamine 396. Residues 454–479 form a disordered region; that stretch reads MSRKALEEDGSSYSSLGRFLDQIQTS.

This sequence belongs to the UDP-glycosyltransferase family. In terms of tissue distribution, strongly expressed in achenes, with lower expression levels detected in receptacles.

The catalysed reaction is a flavonol + UDP-alpha-D-glucose = a flavonol 3-O-beta-D-glucoside + UDP + H(+). Broad spectrum multifunctional glucosyltransferase. Catalyzes the formation of flavonol 3-O-glucosides during fruit ripening. Accepted substrates include several flavonoids, hydroxycoumarins and beta-naphthols. Uses UDP-Glc as a sugar donor, but not UDP-Gal or UDP-GlcUA. May also be involved in detoxification of xenobiotics. The protein is UDP-glucose flavonoid 3-O-glucosyltransferase 6 of Fragaria ananassa (Strawberry).